Consider the following 337-residue polypeptide: LIX1-like protein (337 aa).

The segment at 1–64 (METMRAQRLQ…PLLLSGAPGL (64 aa)) is disordered. Residues 26 to 38 (PGVTGAAAATATP) are compositionally biased toward low complexity. Over residues 39–56 (PAGPPPAPPPPAPPPPPL) the composition is skewed to pro residues.

The protein belongs to the LIX1 family.

The sequence is that of LIX1-like protein (LIX1L) from Homo sapiens (Human).